A 262-amino-acid chain; its full sequence is Putative outer membrane protein CPn_1034/CP_0818/CPj1034/CpB1074 (262 aa).

Residues 1 to 17 form the signal peptide; sequence MKTWLFFTFLFSCSSFY.

It is found in the cell outer membrane. The polypeptide is Putative outer membrane protein CPn_1034/CP_0818/CPj1034/CpB1074 (Chlamydia pneumoniae (Chlamydophila pneumoniae)).